A 204-amino-acid chain; its full sequence is Small ribosomal subunit protein uS4 (204 aa).

The disordered stretch occupies residues 25–47 (SPVNKREYGPGQHGQRRKKPSDY). The region spanning 93–156 (RRLDAVVYRM…KQFAFVMEAA (64 aa)) is the S4 RNA-binding domain.

This sequence belongs to the universal ribosomal protein uS4 family. As to quaternary structure, part of the 30S ribosomal subunit. Contacts protein S5. The interaction surface between S4 and S5 is involved in control of translational fidelity.

In terms of biological role, one of the primary rRNA binding proteins, it binds directly to 16S rRNA where it nucleates assembly of the body of the 30S subunit. Functionally, with S5 and S12 plays an important role in translational accuracy. The protein is Small ribosomal subunit protein uS4 of Rhodospirillum centenum (strain ATCC 51521 / SW).